Here is a 302-residue protein sequence, read N- to C-terminus: N-acetylmuramic acid 6-phosphate etherase (302 aa).

One can recognise an SIS domain in the interval 57–220 (VSEKLKNNGR…TTAVMIKLGK (164 aa)). Residue Glu-85 is the Proton donor of the active site. Residue Glu-116 is part of the active site.

This sequence belongs to the GCKR-like family. MurNAc-6-P etherase subfamily. As to quaternary structure, homodimer.

The catalysed reaction is N-acetyl-D-muramate 6-phosphate + H2O = N-acetyl-D-glucosamine 6-phosphate + (R)-lactate. It functions in the pathway amino-sugar metabolism; N-acetylmuramate degradation. In terms of biological role, specifically catalyzes the cleavage of the D-lactyl ether substituent of MurNAc 6-phosphate, producing GlcNAc 6-phosphate and D-lactate. The sequence is that of N-acetylmuramic acid 6-phosphate etherase from Clostridium acetobutylicum (strain ATCC 824 / DSM 792 / JCM 1419 / IAM 19013 / LMG 5710 / NBRC 13948 / NRRL B-527 / VKM B-1787 / 2291 / W).